Here is a 137-residue protein sequence, read N- to C-terminus: Small ribosomal subunit protein uS9 (137 aa).

The tract at residues Leu-105–Arg-137 is disordered. Over residues Lys-118–Arg-137 the composition is skewed to basic residues.

Belongs to the universal ribosomal protein uS9 family.

The protein is Small ribosomal subunit protein uS9 (rpsI) of Synechocystis sp. (strain ATCC 27184 / PCC 6803 / Kazusa).